The sequence spans 390 residues: Probable tRNA pseudouridine synthase D (390 aa).

Asp93 (nucleophile) is an active-site residue. A TRUD domain is found at 166 to 353 (YVLNYYGIQR…YGTRRKMITP (188 aa)).

It belongs to the pseudouridine synthase TruD family.

It carries out the reaction uridine(13) in tRNA = pseudouridine(13) in tRNA. Functionally, could be responsible for synthesis of pseudouridine from uracil-13 in transfer RNAs. The sequence is that of Probable tRNA pseudouridine synthase D from Methanococcus maripaludis (strain C5 / ATCC BAA-1333).